Here is a 481-residue protein sequence, read N- to C-terminus: Glutamyl-tRNA(Gln) amidotransferase subunit A (481 aa).

Active-site charge relay system residues include Lys-76 and Ser-151. Ser-175 (acyl-ester intermediate) is an active-site residue.

Belongs to the amidase family. GatA subfamily. In terms of assembly, heterotrimer of A, B and C subunits.

It carries out the reaction L-glutamyl-tRNA(Gln) + L-glutamine + ATP + H2O = L-glutaminyl-tRNA(Gln) + L-glutamate + ADP + phosphate + H(+). Allows the formation of correctly charged Gln-tRNA(Gln) through the transamidation of misacylated Glu-tRNA(Gln) in organisms which lack glutaminyl-tRNA synthetase. The reaction takes place in the presence of glutamine and ATP through an activated gamma-phospho-Glu-tRNA(Gln). In Neisseria meningitidis serogroup B (strain ATCC BAA-335 / MC58), this protein is Glutamyl-tRNA(Gln) amidotransferase subunit A.